The chain runs to 421 residues: Imidazolonepropionase (421 aa).

Residues H81 and H83 each contribute to the Fe(3+) site. 2 residues coordinate Zn(2+): H81 and H83. Residues R90, Y153, and H186 each coordinate 4-imidazolone-5-propanoate. Residue Y153 coordinates N-formimidoyl-L-glutamate. Residue H251 coordinates Fe(3+). H251 provides a ligand contact to Zn(2+). E254 provides a ligand contact to 4-imidazolone-5-propanoate. D326 serves as a coordination point for Fe(3+). D326 provides a ligand contact to Zn(2+). N-formimidoyl-L-glutamate contacts are provided by N328 and G330. S331 contacts 4-imidazolone-5-propanoate.

This sequence belongs to the metallo-dependent hydrolases superfamily. HutI family. Requires Zn(2+) as cofactor. Fe(3+) serves as cofactor.

It localises to the cytoplasm. It carries out the reaction 4-imidazolone-5-propanoate + H2O = N-formimidoyl-L-glutamate. It participates in amino-acid degradation; L-histidine degradation into L-glutamate; N-formimidoyl-L-glutamate from L-histidine: step 3/3. Functionally, catalyzes the hydrolytic cleavage of the carbon-nitrogen bond in imidazolone-5-propanoate to yield N-formimidoyl-L-glutamate. It is the third step in the universal histidine degradation pathway. The chain is Imidazolonepropionase from Streptococcus gordonii (strain Challis / ATCC 35105 / BCRC 15272 / CH1 / DL1 / V288).